The chain runs to 331 residues: 6-phosphogluconolactonase (331 aa).

This sequence belongs to the cycloisomerase 2 family.

The enzyme catalyses 6-phospho-D-glucono-1,5-lactone + H2O = 6-phospho-D-gluconate + H(+). It participates in carbohydrate degradation; pentose phosphate pathway; D-ribulose 5-phosphate from D-glucose 6-phosphate (oxidative stage): step 2/3. Functionally, catalyzes the hydrolysis of 6-phosphogluconolactone to 6-phosphogluconate. This chain is 6-phosphogluconolactonase, found in Salmonella paratyphi A (strain ATCC 9150 / SARB42).